A 688-amino-acid chain; its full sequence is Potassium-transporting ATPase ATP-binding subunit (688 aa).

4 consecutive transmembrane segments (helical) span residues 37 to 57, 65 to 85, 219 to 239, and 262 to 282; these read FIVYIASILTTVLYVFSLFGI, ILFISILLWFTVLFANFAEAI, IALQILLVSLTIIFLVVTASL, and LALLVCLAPTTIGALLSAIGI. Residue Asp313 is the 4-aspartylphosphate intermediate of the active site. ATP is bound by residues Asp350, Glu354, 383 to 390, and Lys401; that span reads FTAKTRMS. Mg(2+) contacts are provided by Asp524 and Asp528. The next 3 membrane-spanning stretches (helical) occupy residues 586-606, 622-642, and 668-688; these read IANDIAKYFAIIPPLFIGLFP, AILSAVIYNAFIIIFLIPLAL, and IIAPFIAIKGIDILITMLGIV.

It belongs to the cation transport ATPase (P-type) (TC 3.A.3) family. Type IA subfamily. In terms of assembly, the system is composed of three essential subunits: KdpA, KdpB and KdpC.

The protein resides in the cell membrane. It catalyses the reaction K(+)(out) + ATP + H2O = K(+)(in) + ADP + phosphate + H(+). Functionally, part of the high-affinity ATP-driven potassium transport (or Kdp) system, which catalyzes the hydrolysis of ATP coupled with the electrogenic transport of potassium into the cytoplasm. This subunit is responsible for energy coupling to the transport system and for the release of the potassium ions to the cytoplasm. This chain is Potassium-transporting ATPase ATP-binding subunit, found in Clostridium perfringens (strain ATCC 13124 / DSM 756 / JCM 1290 / NCIMB 6125 / NCTC 8237 / Type A).